A 507-amino-acid polypeptide reads, in one-letter code: Proton-coupled zinc antiporter SLC30A1 (507 aa).

Residues 1–10 (MGCWGRNRGR) lie on the Cytoplasmic side of the membrane. A helical membrane pass occupies residues 11 to 31 (LLCMLLLTFMFMVLEVVVSRV). Topologically, residues 32–35 (TASL) are extracellular. The chain crosses the membrane as a helical span at residues 36-56 (AMLSDSFHMLSDVLALVVALV). Residues His43 and Asp47 each contribute to the Zn(2+) site. The Cytoplasmic segment spans residues 57-78 (AERFARRTHATQKNTFGWIRAE). The chain crosses the membrane as a helical span at residues 79–99 (VMGALVNAIFLTGLCFAILLE). The Extracellular segment spans residues 100 to 113 (AVERFIEPHEMQQP). Residues 114–134 (LVVLSVGVAGLLVNVLGLCLF) traverse the membrane as a helical segment. Topologically, residues 135-247 (HHHSGEGQGA…RAGQLNMRGV (113 aa)) are cytoplasmic. The tract at residues 140 to 218 (EGQGAGHGHS…EKLRSDDPVD (79 aa)) is disordered. Positions 145–156 (GHGHSHGHGHGH) are 6 X 2 AA approximate repeats of H-G. Residues 147–165 (GHSHGHGHGHLAKGARKAG) are compositionally biased toward basic residues. Over residues 188-200 (TNTLVANTSNSNG) the composition is skewed to polar residues. Positions 204 to 215 (DQAEPEKLRSDD) are enriched in basic and acidic residues. A helical membrane pass occupies residues 248–268 (FLHVLGDALGSVIVVVNALVF). Zn(2+)-binding residues include His250 and Asp254. At 269–307 (YFSWKGCTEDDFCVNPCFPDPCKSSVELMNSTQAPMHEA) the chain is on the extracellular side. A glycan (N-linked (GlcNAc...) asparagine) is linked at Asn298. Residues 308–328 (GPCWVLYLDPTLCIIMVCILL) form a helical membrane-spanning segment. The Cytoplasmic segment spans residues 329–507 (YTTYPLLKES…VPNKQPESSL (179 aa)). Ser506 carries the post-translational modification Phosphoserine.

It belongs to the cation diffusion facilitator (CDF) transporter (TC 2.A.4) family. SLC30A subfamily. Homodimer. Interacts with TMEM163. Interacts and forms a complex with TMC6 and TMC8; the interaction regulates zinc transport into the ER. As to expression, widely expressed. Detected in duodenum and jejunum but not in ileum and colon (at protein level). Expressed by neuroglial cells (at protein level).

Its subcellular location is the cell membrane. The protein localises to the basolateral cell membrane. It localises to the cytoplasmic vesicle membrane. The protein resides in the cytoplasm. It is found in the endoplasmic reticulum membrane. Its subcellular location is the golgi apparatus membrane. The protein localises to the nucleus membrane. The catalysed reaction is Zn(2+)(in) + 2 H(+)(out) = Zn(2+)(out) + 2 H(+)(in). Calcium-dependent. Zinc ion:proton antiporter that could function at the plasma membrane mediating zinc efflux from cells against its electrochemical gradient protecting them from intracellular zinc accumulation and toxicity. Alternatively, could prevent the transport to the plasma membrane of CACNB2, the L-type calcium channels regulatory subunit, through a yet to be defined mechanism. By modulating the expression of these channels at the plasma membrane, could prevent calcium and zinc influx into cells. By the same mechanism, could also prevent L-type calcium channels-mediated heavy metal influx into cells. In some cells, could also function as a zinc ion:proton antiporter mediating zinc entry into the lumen of cytoplasmic vesicles. In macrophages, can increase zinc ions concentration into the lumen of cytoplasmic vesicles containing engulfed bacteria and could help inactivate them. Forms a complex with TMC6/EVER1 and TMC8/EVER2 at the ER membrane of keratynocytes which facilitates zinc uptake into the ER. Down-regulates the activity of transcription factors induced by zinc and cytokines. In Rattus norvegicus (Rat), this protein is Proton-coupled zinc antiporter SLC30A1.